Here is a 500-residue protein sequence, read N- to C-terminus: L-arabinose isomerase (500 aa).

Mn(2+) is bound by residues Glu306, Glu333, His350, and His450.

This sequence belongs to the arabinose isomerase family. Homohexamer. Requires Mn(2+) as cofactor.

The enzyme catalyses beta-L-arabinopyranose = L-ribulose. It participates in carbohydrate degradation; L-arabinose degradation via L-ribulose; D-xylulose 5-phosphate from L-arabinose (bacterial route): step 1/3. Its function is as follows. Catalyzes the conversion of L-arabinose to L-ribulose. The sequence is that of L-arabinose isomerase from Escherichia coli O6:H1 (strain CFT073 / ATCC 700928 / UPEC).